We begin with the raw amino-acid sequence, 420 residues long: Putative epoxide hydrolase (420 aa).

It belongs to the peptidase S33 family.

It participates in mycotoxin biosynthesis. Functionally, putative epoxide hydrolase; part of the fragmented gene cluster that mediates the biosynthesis of dothistromin (DOTH), a polyketide toxin very similar in structure to the aflatoxin precursor, versicolorin B. The first step of the pathway is the conversion of acetate to norsolorinic acid (NOR) and requires the fatty acid synthase subunits hexA and hexB, as well as the polyketide synthase pksA. PksA combines a hexanoyl starter unit and 7 malonyl-CoA extender units to synthesize the precursor NOR. The hexanoyl starter unit is provided to the acyl-carrier protein (ACP) domain by the fungal fatty acid synthase hexA/hexB. The second step is the conversion of NOR to averantin (AVN) and requires the norsolorinic acid ketoreductase nor1, which catalyzes the dehydration of norsolorinic acid to form (1'S)-averantin. The cytochrome P450 monooxygenase avnA then catalyzes the hydroxylation of AVN to 5'hydroxyaverantin (HAVN). The next step is performed by adhA that transforms HAVN to averufin (AVF). Averufin might then be converted to hydroxyversicolorone by cypX and avfA. Hydroxyversicolorone is further converted versiconal hemiacetal acetate (VHA) by moxY. VHA is then the substrate for the versiconal hemiacetal acetate esterase est1 to yield versiconal (VAL). Versicolorin B synthase vbsA then converts VAL to versicolorin B (VERB) by closing the bisfuran ring. Then, the activity of the versicolorin B desaturase verB leads to versicolorin A (VERA). DotB, a predicted chloroperoxidase, may perform epoxidation of the A-ring of VERA. Alternatively, a cytochrome P450, such as cypX or avnA could catalyze this step. It is also possible that another, uncharacterized, cytochrome P450 enzyme is responsible for this step. Opening of the epoxide could potentially be achieved by the epoxide hydrolase epoA. However, epoA seems not to be required for DOTH biosynthesis, but other epoxide hydrolases may have the ability to complement this hydrolysis. Alternatively, opening of the epoxide ring could be achieved non-enzymatically. The next step is the deoxygenation of ring A to yield the 5,8-dihydroxyanthraquinone which is most likely catalyzed by the NADPH dehydrogenase encoded by ver1. The last stages of DOTH biosynthesis are proposed to involve hydroxylation of the bisfuran. OrdB and norB might have oxidative roles here. An alternative possibility is that cytochrome P450 monoogenases such as avnA and cypX might perform these steps in addition to previously proposed steps. The protein is Putative epoxide hydrolase of Dothistroma septosporum (Red band needle blight fungus).